A 309-amino-acid chain; its full sequence is Olfactory receptor 5H17 (309 aa).

Over 1-28 (MEKKNETLWTEFVLTGLTCLPQWKPLLF) the chain is Extracellular. Asn-5 carries N-linked (GlcNAc...) asparagine glycosylation. The chain crosses the membrane as a helical span at residues 29–49 (LVFLVIYFMTIVGNLGLITLI). Topologically, residues 50-56 (WNDPHLH) are cytoplasmic. A helical transmembrane segment spans residues 57–77 (IPMYLFLSNLAFVDTWLSSTV). The Extracellular portion of the chain corresponds to 78–93 (TPRMLFNLLDKGKVIS). The helical transmembrane segment at 94 to 114 (VAECKTQFFSFAISVTTECFL) threads the bilayer. A disulfide bridge links Cys-97 with Cys-189. Topologically, residues 115–144 (LAAMAYDRYAAICNPLLYPVIMTNRLCVRL) are cytoplasmic. A helical transmembrane segment spans residues 145-165 (LALSFIGGFLHAVIHESFLSR). Residues 166–198 (LTFCNSNIIYHFYCDVIPLLKISCTDPSLNYLI) are Extracellular-facing. Residues 199-219 (IFIFSGSIQVFTIMTVLISYT) traverse the membrane as a helical segment. Over 220–239 (FVLFTILKKKSDKGIRKAFS) the chain is Cytoplasmic. The chain crosses the membrane as a helical span at residues 240 to 260 (TCGAHLLSVSLYYGPLLFMYV). Over 261–271 (HPASSEVDDQD) the chain is Extracellular. A helical transmembrane segment spans residues 272 to 292 (MILSLFYTVIIPVLNPIIYSL). Residues 293 to 309 (RNKQVIDSLKKMLKMMV) lie on the Cytoplasmic side of the membrane.

The protein belongs to the G-protein coupled receptor 1 family.

The protein resides in the cell membrane. Functionally, potential odorant receptor. This chain is Olfactory receptor 5H17, found in Mus musculus (Mouse).